The chain runs to 371 residues: Probable inactive methyltransferase Os04g0175900 (371 aa).

137–143 (LDVDEDN) contributes to the substrate binding site. Residues 170–188 (LFEYMGTNHRFNMLFNQAM) form a substrate binding region. 4 residues coordinate S-adenosyl-L-methionine: G216, D239, M260, and K273.

This sequence belongs to the class I-like SAM-binding methyltransferase superfamily. Cation-independent O-methyltransferase family. COMT subfamily.

In Oryza sativa subsp. japonica (Rice), this protein is Probable inactive methyltransferase Os04g0175900.